The sequence spans 192 residues: Cell division protein SepF (192 aa).

Residues 15–70 (GDPLEYEEDGEEYEQVYREENKREEARRATAGTAAAATPTAAAQASDAAPMGSGPA) form a disordered region. The segment covering 18–28 (LEYEEDGEEYE) has biased composition (acidic residues). Residues 29–42 (QVYREENKREEARR) show a composition bias toward basic and acidic residues. Residues 43–63 (ATAGTAAAATPTAAAQASDAA) are compositionally biased toward low complexity.

Belongs to the SepF family. As to quaternary structure, homodimer. Interacts with FtsZ.

It is found in the cytoplasm. Its function is as follows. Cell division protein that is part of the divisome complex and is recruited early to the Z-ring. Probably stimulates Z-ring formation, perhaps through the cross-linking of FtsZ protofilaments. Its function overlaps with FtsA. This Gloeobacter violaceus (strain ATCC 29082 / PCC 7421) protein is Cell division protein SepF.